The sequence spans 183 residues: Microfibrillar-associated protein 2 (183 aa).

A signal peptide (or 18) is located at residues 1 to 16; that stretch reads MRAACLFLLFMPGLLA. Gln-17 bears the Pyrrolidone carboxylic acid mark. Sulfotyrosine occurs at positions 46, 47, and 49. Residues 52–92 are disordered; that stretch reads VSPRTPEEQFQSQQQVQQEVIPAPTPEPAAAGDLETEPTEP. The span at 59–70 shows a compositional bias: low complexity; the sequence is EQFQSQQQVQQE. Positions 153-183 constitute a ShKT domain; that stretch reads CRDKFSKCGVMAVSGLCQSVAASCARSCGGC. 3 cysteine pairs are disulfide-bonded: Cys-153–Cys-183, Cys-160–Cys-176, and Cys-169–Cys-180.

The protein belongs to the MFAP family. Forms a ternary complex with BGN and ELN. Interacts with FBN1 (via N-terminal domain) and FBN2. In terms of processing, forms intermolecular disulfide bonds either with other MAGP-1 molecules or with other components of the microfibrils. May form transglutaminase cross-links. Post-translationally, O-glycosylated.

It is found in the secreted. It localises to the extracellular space. The protein resides in the extracellular matrix. Its function is as follows. Component of the elastin-associated microfibrils. The sequence is that of Microfibrillar-associated protein 2 (Mfap2) from Mus musculus (Mouse).